The following is a 257-amino-acid chain: Ribonuclease PH (257 aa).

Phosphate-binding positions include Arg-86 and 124–126; that span reads GTR.

The protein belongs to the RNase PH family. Homohexameric ring arranged as a trimer of dimers.

The enzyme catalyses tRNA(n+1) + phosphate = tRNA(n) + a ribonucleoside 5'-diphosphate. Its function is as follows. Phosphorolytic 3'-5' exoribonuclease that plays an important role in tRNA 3'-end maturation. Removes nucleotide residues following the 3'-CCA terminus of tRNAs; can also add nucleotides to the ends of RNA molecules by using nucleoside diphosphates as substrates, but this may not be physiologically important. Probably plays a role in initiation of 16S rRNA degradation (leading to ribosome degradation) during starvation. The sequence is that of Ribonuclease PH from Halalkalibacterium halodurans (strain ATCC BAA-125 / DSM 18197 / FERM 7344 / JCM 9153 / C-125) (Bacillus halodurans).